Consider the following 393-residue polypeptide: Probable protein phosphatase 2C 72 (393 aa).

Residues 49–357 (EFSMAVVQAN…DDITVVVVFF (309 aa)) enclose the PPM-type phosphatase domain. Mn(2+) contacts are provided by Asp-88 and Gly-89. The helical transmembrane segment at 147 to 167 (LAAVGSCCLVGVICAGNLYIA) threads the bilayer. Residues Asp-289 and Asp-348 each contribute to the Mn(2+) site.

Belongs to the PP2C family. Mg(2+) serves as cofactor. Mn(2+) is required as a cofactor.

Its subcellular location is the membrane. The enzyme catalyses O-phospho-L-seryl-[protein] + H2O = L-seryl-[protein] + phosphate. It catalyses the reaction O-phospho-L-threonyl-[protein] + H2O = L-threonyl-[protein] + phosphate. The polypeptide is Probable protein phosphatase 2C 72 (Oryza sativa subsp. japonica (Rice)).